The primary structure comprises 627 residues: Neuronal acetylcholine receptor subunit alpha-4 (627 aa).

The N-terminal stretch at 1 to 26 (MELGGPGAPRLLPPLLLLLGTGLLRA) is a signal peptide. At 27 to 249 (SSHVETRAHA…RRLPLFYTIN (223 aa)) the chain is on the extracellular side. An N-linked (GlcNAc...) asparagine glycan is attached at N57. 2 residues coordinate Ca(2+): V76 and E78. N107 and N174 each carry an N-linked (GlcNAc...) asparagine glycan. Disulfide bonds link C161–C175 and C225–C226. Residues 250-269 (LIIPCLLISCLTVLVFYLPS) form a helical membrane-spanning segment. Residue C271 is the site of S-palmitoyl cysteine attachment. 2 consecutive transmembrane segments (helical) span residues 275–291 (ITLC…FLLL) and 306–330 (IGEY…VLNV). Residues 331-600 (HHRSPRTHTM…WKYVAMVIDR (270 aa)) lie on the Cytoplasmic side of the membrane. Disordered regions lie at residues 382-481 (PRFW…VEGG) and 496-561 (DDAA…LPLS). S424 is modified (phosphoserine). Over residues 501 to 511 (EADGQAAGALA) the composition is skewed to low complexity. Phosphoserine is present on residues S538 and S541. The segment covering 538–548 (SSVSPSATVKT) has biased composition (polar residues). A helical membrane pass occupies residues 601–619 (IFLWMFIIVCLLGTVGLFL).

It belongs to the ligand-gated ion channel (TC 1.A.9) family. Acetylcholine receptor (TC 1.A.9.1) subfamily. Alpha-4/CHRNA4 sub-subfamily. As to quaternary structure, neuronal AChR is composed of two different types of subunits: alpha and beta. CHRNA4 forms heteropentameric neuronal acetylcholine receptors with CHRNB2 and CHRNB4, as well as CHRNA5 and CHRNB3 as accesory subunits. Found in two major stoichiometric forms, LS (low agonist sensitivity): (CHRNA4)3:(CHRNB2)2 and HS (high agonist sensitivity): (CHRNA4)2:(CHRNB2)3, the two stoichiometric forms differ in their unitary conductance, calcium permeability, ACh sensitivity and potentiation by divalent cation. Cells produce predominantly an (CHRNA4)3:(CHRNB2)2 nAChR. The (CHRNA4)2:(CHRNB2)3 expression is selectively up-regulated by nicotine and has lower single channel conductance and calcium permeability. In the striatum, also forms CHRNA4:CHRNA6:CHRNB2 complexes. Also found in the stoichiometric form: (CHRNA4:CHRNB2)2:CHRNB3. Interacts with RIC3; which is required for proper folding and assembly. Interacts with LYPD6.

The protein resides in the synaptic cell membrane. The protein localises to the cell membrane. It catalyses the reaction Ca(2+)(in) = Ca(2+)(out). The enzyme catalyses K(+)(in) = K(+)(out). It carries out the reaction Na(+)(in) = Na(+)(out). Activated by a myriad of ligands such as acetylcholine, cytisine, nicotine, choline and epibatidine. Channel potentiation by calcium is stoichiometry-selective, CHRNA4:CHRNB2 nACh receptor is achieved by calcium association with topographically distinct sites framed by anionic residues within the CHRNA4 subunit and between the CHRNA4 and CHRNB2 subunits. nAChR activity is inhibited by the antagonist alpha-conotoxins BuIA, PnIA, GID and MII, small disulfide-constrained peptides from cone snails. Functionally, component of neuronal acetylcholine receptors (nAChRs) that function as pentameric, ligand-gated cation channels with high calcium permeability among other activities. nAChRs are excitatory neurotrasnmitter receptors formed by a collection of nAChR subunits known to mediate synaptic transmission in the nervous system and the neuromuscular junction. Each nAchR subunit confers differential attributes to channel properties, including activation, deactivation and desensitization kinetics, pH sensitivity, cation permeability, and binding to allosteric modulators. CHRNA4 forms heteropentameric neuronal acetylcholine receptors with CHRNB2 and CHRNB4, as well as CHRNA5 and CHRNB3 as accesory subunits. Is the most abundant nAChR subtype expressed in the central nervous system. Found in two major stoichiometric forms,(CHRNA4)3:(CHRNB2)2 and (CHRNA4)2:(CHRNB2)3, the two stoichiometric forms differ in their unitary conductance, calcium permeability, ACh sensitivity and potentiation by divalent cation. Involved in the modulation of calcium-dependent signaling pathways, influences the release of neurotransmitters, including dopamine, glutamate and GABA. This is Neuronal acetylcholine receptor subunit alpha-4 from Homo sapiens (Human).